The chain runs to 177 residues: Co-chaperone protein HscB homolog (177 aa).

A J domain is found at 8 to 80; the sequence is DFFALFGLPR…LPRAQYMLEL (73 aa).

Belongs to the HscB family. In terms of assembly, interacts with HscA and stimulates its ATPase activity.

Co-chaperone involved in the maturation of iron-sulfur cluster-containing proteins. Seems to help targeting proteins to be folded toward HscA. The polypeptide is Co-chaperone protein HscB homolog (Aromatoleum aromaticum (strain DSM 19018 / LMG 30748 / EbN1) (Azoarcus sp. (strain EbN1))).